The chain runs to 328 residues: MQPQRVVITPGEPAGIGPELVVQLAQRSWPVELVVCADATLLQDRANMLGLPLRLLPYRADQPPVPQQQGTLTLLPVVLRKPATPGVLSTDNGHYVVDTLARACDGCLNGEFAALITGPVHKGVINEAGVPFTGHTEFFEERSHSDNVVMMLATEELRVALATTHLPLKAISDAITPALLREIITILHHDLRTKFGIADPHVLVCGLNPHAGEGGHMGTEEIDTIIPVLNEMRAKGMNLSGPLPADTLFQPKYLDSADAVLAMYHDQGLPVLKYQGFGRAVNITLGLPFIRTSVDHGTALDLAGKGKADVGSFITALNLAIKMIVNTQ.

His-135 and Thr-136 together coordinate substrate. A divalent metal cation is bound by residues His-165, His-210, and His-265. Substrate-binding residues include Lys-273, Asn-282, and Arg-291.

The protein belongs to the PdxA family. As to quaternary structure, homodimer. Zn(2+) serves as cofactor. The cofactor is Mg(2+). Co(2+) is required as a cofactor.

The protein localises to the cytoplasm. It catalyses the reaction 4-(phosphooxy)-L-threonine + NAD(+) = 3-amino-2-oxopropyl phosphate + CO2 + NADH. It functions in the pathway cofactor biosynthesis; pyridoxine 5'-phosphate biosynthesis; pyridoxine 5'-phosphate from D-erythrose 4-phosphate: step 4/5. In terms of biological role, catalyzes the NAD(P)-dependent oxidation of 4-(phosphooxy)-L-threonine (HTP) into 2-amino-3-oxo-4-(phosphooxy)butyric acid which spontaneously decarboxylates to form 3-amino-2-oxopropyl phosphate (AHAP). This is 4-hydroxythreonine-4-phosphate dehydrogenase from Enterobacter sp. (strain 638).